Reading from the N-terminus, the 126-residue chain is Phosphoribosyl-AMP cyclohydrolase (126 aa).

Residue aspartate 82 coordinates Mg(2+). Residue cysteine 83 participates in Zn(2+) binding. Mg(2+) is bound by residues aspartate 84 and aspartate 86. 2 residues coordinate Zn(2+): cysteine 99 and cysteine 106.

It belongs to the PRA-CH family. In terms of assembly, homodimer. It depends on Mg(2+) as a cofactor. Zn(2+) serves as cofactor.

The protein localises to the cytoplasm. The catalysed reaction is 1-(5-phospho-beta-D-ribosyl)-5'-AMP + H2O = 1-(5-phospho-beta-D-ribosyl)-5-[(5-phospho-beta-D-ribosylamino)methylideneamino]imidazole-4-carboxamide. It participates in amino-acid biosynthesis; L-histidine biosynthesis; L-histidine from 5-phospho-alpha-D-ribose 1-diphosphate: step 3/9. Its function is as follows. Catalyzes the hydrolysis of the adenine ring of phosphoribosyl-AMP. The protein is Phosphoribosyl-AMP cyclohydrolase of Micrococcus luteus (strain ATCC 4698 / DSM 20030 / JCM 1464 / CCM 169 / CCUG 5858 / IAM 1056 / NBRC 3333 / NCIMB 9278 / NCTC 2665 / VKM Ac-2230) (Micrococcus lysodeikticus).